Reading from the N-terminus, the 597-residue chain is MLLLLLLLLLPPLLCGRVGAKEQKDYLLTMQKSVTVQEGLCVSVLCSFSYPQNGWTDSDPVHGYWFRAGDHVSRNVPVATNNPARAVQEETRDRFHLLGDPQNKDCTLSIRDTRESDAGTYVFRVERGNMKWNYKYDQLSVNVTASQDLLSRYRLEVPESVTVQEGLCVSVPCSVLYPHCNWTASSPVYGSWFKEGADIPCDIPVATNTPSGKVQEDTQGRFLLLGDPQTNNCSLSIRDARKGDSGKYYFQVERGSRKWNYIYDKLSVHVTALTHLPTFSIPGTLESGHPRNLTCSVPWACEQGTPPTITWMGASVSSLEPTISRSSMLSLIPKPQDHGTSLTCQVTLPGAGVTTTRAVRLNISYPPQNLTMTVFQGDGTASTTLRNGSALSVLEGQSLHLVCAVDSNPPARLSWTWGSLTLSPSQSSNLGVLELPRVHVKDEGEFTCRAQNPLGSQHISLSLSLQNEYTGKMRPISGVTLGAVGGAGATALVFLSFCIIFVVVRSCRKKSARPAVGVGDTGMEDTNAVRGSASQGPLIESPADDSPPHHAPPALATPFPEEGEIQYASLSFHKARPQYPQEQEAIGYEYSEINILK.

An N-terminal signal peptide occupies residues 1–20 (MLLLLLLLLLPPLLCGRVGA). Ig-like V-type domains lie at 21–144 (KEQK…VNVT) and 145–271 (ASQD…VHVT). At 21–483 (KEQKDYLLTM…RPISGVTLGA (463 aa)) the chain is on the extracellular side. Residues cysteine 46 and cysteine 106 are joined by a disulfide bond. Residues asparagine 142, asparagine 181, asparagine 232, and asparagine 292 are each glycosylated (N-linked (GlcNAc...) asparagine). Disulfide bonds link cysteine 168–cysteine 301, cysteine 173–cysteine 233, and cysteine 295–cysteine 344. The region spanning 277 to 360 (PTFSIPGTLE…AGVTTTRAVR (84 aa)) is the Ig-like C2-type 1 domain. N-linked (GlcNAc...) asparagine glycosylation is found at asparagine 362, asparagine 369, and asparagine 387. The Ig-like C2-type 2 domain occupies 367 to 464 (PQNLTMTVFQ…GSQHISLSLS (98 aa)). A disulfide bridge links cysteine 403 with cysteine 448. The helical transmembrane segment at 484–504 (VGGAGATALVFLSFCIIFVVV) threads the bilayer. Residues 505–597 (RSCRKKSARP…YEYSEINILK (93 aa)) lie on the Cytoplasmic side of the membrane. The segment at 514–558 (PAVGVGDTGMEDTNAVRGSASQGPLIESPADDSPPHHAPPALATP) is disordered. The ITIM motif signature appears at 565-570 (IQYASL). A phosphotyrosine mark is found at tyrosine 567 and tyrosine 590. An SLAM-like motif motif is present at residues 588-593 (YEYSEI).

The protein belongs to the immunoglobulin superfamily. SIGLEC (sialic acid binding Ig-like lectin) family.

The protein resides in the membrane. Functionally, putative adhesion molecule that mediates sialic-acid dependent binding to cells. The sialic acid recognition site may be masked by cis interactions with sialic acids on the same cell surface. The polypeptide is Sialic acid-binding Ig-like lectin 12 (SIGLEC12) (Pan troglodytes (Chimpanzee)).